Consider the following 62-residue polypeptide: uncharacterized protein (62 aa).

This is an uncharacterized protein from Invertebrate iridescent virus 6 (IIV-6).